A 361-amino-acid polypeptide reads, in one-letter code: Phosphoserine aminotransferase (361 aa).

Arg-43 contacts L-glutamate. The pyridoxal 5'-phosphate site is built by Trp-103, Thr-153, Asp-173, and Gln-196. Lys-197 carries the post-translational modification N6-(pyridoxal phosphate)lysine. 238–239 (NT) contributes to the pyridoxal 5'-phosphate binding site.

This sequence belongs to the class-V pyridoxal-phosphate-dependent aminotransferase family. SerC subfamily. In terms of assembly, homodimer. Pyridoxal 5'-phosphate serves as cofactor.

The protein resides in the cytoplasm. The enzyme catalyses O-phospho-L-serine + 2-oxoglutarate = 3-phosphooxypyruvate + L-glutamate. It carries out the reaction 4-(phosphooxy)-L-threonine + 2-oxoglutarate = (R)-3-hydroxy-2-oxo-4-phosphooxybutanoate + L-glutamate. It functions in the pathway amino-acid biosynthesis; L-serine biosynthesis; L-serine from 3-phospho-D-glycerate: step 2/3. It participates in cofactor biosynthesis; pyridoxine 5'-phosphate biosynthesis; pyridoxine 5'-phosphate from D-erythrose 4-phosphate: step 3/5. In terms of biological role, catalyzes the reversible conversion of 3-phosphohydroxypyruvate to phosphoserine and of 3-hydroxy-2-oxo-4-phosphonooxybutanoate to phosphohydroxythreonine. In Hahella chejuensis (strain KCTC 2396), this protein is Phosphoserine aminotransferase.